A 222-amino-acid polypeptide reads, in one-letter code: Deoxyribose-phosphate aldolase (222 aa).

Aspartate 93 (proton donor/acceptor) is an active-site residue. The active-site Schiff-base intermediate with acetaldehyde is the lysine 156. Residue lysine 186 is the Proton donor/acceptor of the active site.

It belongs to the DeoC/FbaB aldolase family. DeoC type 1 subfamily.

The protein localises to the cytoplasm. It catalyses the reaction 2-deoxy-D-ribose 5-phosphate = D-glyceraldehyde 3-phosphate + acetaldehyde. The protein operates within carbohydrate degradation; 2-deoxy-D-ribose 1-phosphate degradation; D-glyceraldehyde 3-phosphate and acetaldehyde from 2-deoxy-alpha-D-ribose 1-phosphate: step 2/2. Catalyzes a reversible aldol reaction between acetaldehyde and D-glyceraldehyde 3-phosphate to generate 2-deoxy-D-ribose 5-phosphate. This is Deoxyribose-phosphate aldolase from Corynebacterium glutamicum (strain ATCC 13032 / DSM 20300 / JCM 1318 / BCRC 11384 / CCUG 27702 / LMG 3730 / NBRC 12168 / NCIMB 10025 / NRRL B-2784 / 534).